The primary structure comprises 132 residues: Small ribosomal subunit protein uS8 (132 aa).

The protein belongs to the universal ribosomal protein uS8 family. As to quaternary structure, part of the 30S ribosomal subunit. Contacts proteins S5 and S12.

Functionally, one of the primary rRNA binding proteins, it binds directly to 16S rRNA central domain where it helps coordinate assembly of the platform of the 30S subunit. The chain is Small ribosomal subunit protein uS8 from Nitrobacter hamburgensis (strain DSM 10229 / NCIMB 13809 / X14).